Consider the following 957-residue polypeptide: Glycine dehydrogenase (decarboxylating) (957 aa).

An N6-(pyridoxal phosphate)lysine modification is found at lysine 708.

It belongs to the GcvP family. In terms of assembly, the glycine cleavage system is composed of four proteins: P, T, L and H. The cofactor is pyridoxal 5'-phosphate.

The enzyme catalyses N(6)-[(R)-lipoyl]-L-lysyl-[glycine-cleavage complex H protein] + glycine + H(+) = N(6)-[(R)-S(8)-aminomethyldihydrolipoyl]-L-lysyl-[glycine-cleavage complex H protein] + CO2. In terms of biological role, the glycine cleavage system catalyzes the degradation of glycine. The P protein binds the alpha-amino group of glycine through its pyridoxal phosphate cofactor; CO(2) is released and the remaining methylamine moiety is then transferred to the lipoamide cofactor of the H protein. This is Glycine dehydrogenase (decarboxylating) from Cronobacter sakazakii (strain ATCC BAA-894) (Enterobacter sakazakii).